Consider the following 236-residue polypeptide: Small ribosomal subunit protein uS3 (236 aa).

The region spanning 39–107 (IRSYVMEELK…ETSLNIVEIR (69 aa)) is the KH type-2 domain. Positions 214-236 (ASEHRATRNDNSSSSLNRRRESV) are disordered.

The protein belongs to the universal ribosomal protein uS3 family. In terms of assembly, part of the 30S ribosomal subunit. Forms a tight complex with proteins S10 and S14.

Binds the lower part of the 30S subunit head. Binds mRNA in the 70S ribosome, positioning it for translation. The protein is Small ribosomal subunit protein uS3 of Bartonella bacilliformis (strain ATCC 35685 / KC583 / Herrer 020/F12,63).